The primary structure comprises 326 residues: MTMDDLDLRLLDGFQRDLPLETRPFAAIANRLNTSEAEVIARLARLRDEGLIARIGATCRPNTAGASTLAALRVPVRRIDKVAALVGAEPGVNHSYLREGSDWNLWFVATAPDAEALEESLVRIETATGLVPLSLPLVRAFNIDLGFPLIGPRRAMALDRPTDLDVLRPRDKALMQALTTGLALVPRPFVALGQALGRSEAEVISRIRALAAARILTRVGVIVRHRALGWCENAMVVWRLPEPAVEAAGTALAAVPGVTLCYQRRTVPGLWNWPLFCMIHARSRAEAMEVLVQARALPELQGVPHRILFSTRCFRQRGAVIAEVAA.

The protein belongs to the Ahb/Nir family. As to quaternary structure, forms a complex composed of NirDL, NirG and NirH. All proteins are required for the total conversion of siroheme to didecarboxysiroheme.

The enzyme catalyses siroheme + 2 H(+) = 12,18-didecarboxysiroheme + 2 CO2. Its pathway is porphyrin-containing compound metabolism. Functionally, involved in heme d1 biosynthesis. Catalyzes the decarboxylation of siroheme into didecarboxysiroheme. Siroheme is probably decarboxylated to monodecarboxysiroheme, which is in turn decarboxylated to didecarboxysiroheme. The polypeptide is Siroheme decarboxylase NirDL subunit (Paracoccus pantotrophus (Thiosphaera pantotropha)).